We begin with the raw amino-acid sequence, 258 residues long: GCN5-related N-acetyltransferase 2, chloroplastic (258 aa).

The N-terminal 58 residues, 1–58 (MLLIPISSSSSSSISPPPNSYPSNHHSLFFSNLTFPIQHGSRKLKTLRLRANFWESIR), are a transit peptide targeting the chloroplast. The segment at 107–194 (IIFSSGGEID…DHAFNATIWD (88 aa)) is interaction with begomoviruses NSP protein. Residues 107–258 (IIFSSGGEID…GIKGMFWYPK (152 aa)) form the N-acetyltransferase domain. Acetyl-CoA is bound by residues 195–197 (VLV), 203–208 (GQGLGK), 231–233 (DSQ), and Tyr238. Residue Tyr238 is the Proton donor of the active site.

It belongs to the acetyltransferase family. GNAT subfamily. In terms of assembly, oligomer. Interacts with begomoviruses NSP but not with CP. This interaction may allow NSP to recruit NSI monomers to acetylate viral genome-bound CP and thus regulate nuclear export of viral genome by NSP. Post-translationally, S-sulfhydrated and activated by hydrogen sulfide H(2)S to promote melatonin accumulation and subsequent melatonin-dependent stomotal closure to combat osmotic stress. Autoacetylated. In terms of tissue distribution, highly expressed in cauline leaves and seeds, at lower levels in stems, siliques, inflorescences and rosettes leaves and at very low levels in roots. Expressed in the xylem parenchyma and phloem of the leaves and root, and in guard cells of young leaves.

The protein resides in the plastid. The protein localises to the chloroplast. It carries out the reaction 5-methoxytryptamine + acetyl-CoA = melatonin + CoA + H(+). The enzyme catalyses L-lysyl-[histone] + acetyl-CoA = N(6)-acetyl-L-lysyl-[histone] + CoA + H(+). The catalysed reaction is L-lysyl-[protein] + acetyl-CoA = N(6)-acetyl-L-lysyl-[protein] + CoA + H(+). It catalyses the reaction serotonin + acetyl-CoA = N-acetylserotonin + CoA + H(+). It carries out the reaction N-terminal L-alanyl-[protein] + acetyl-CoA = N-terminal N(alpha)-acetyl-L-alanyl-[protein] + CoA + H(+). The enzyme catalyses N-terminal L-seryl-[protein] + acetyl-CoA = N-terminal N(alpha)-acetyl-L-seryl-[protein] + CoA + H(+). The catalysed reaction is N-terminal L-valyl-[protein] + acetyl-CoA = N-terminal N(alpha)-acetyl-L-valyl-[protein] + CoA + H(+). It catalyses the reaction N-terminal glycyl-[protein] + acetyl-CoA = N-terminal N(alpha)-acetylglycyl-[protein] + CoA + H(+). It carries out the reaction an N-terminal L-alpha-aminoacyl-[protein] + acetyl-CoA = N-terminal N(alpha)-acetyl-L-alpha-aminoacyl-[protein] + CoA + H(+). The enzyme catalyses N-terminal L-threonyl-[protein] + acetyl-CoA = N-terminal N(alpha)-acetyl-L-threonyl-[protein] + CoA + H(+). The catalysed reaction is N-terminal L-methionyl-[protein] + acetyl-CoA = N-terminal N(alpha)-acetyl-L-methionyl-[protein] + CoA + H(+). It catalyses the reaction N-terminal L-leucyl-[protein] + acetyl-CoA = N-terminal N(alpha)-acetyl-L-leucyl-[protein] + CoA + H(+). Its activity is regulated as follows. Inhibited by the viral nuclear shuttle protein (NSP) that binds to the region required for oligomerization. Protein acetyltransferase with dual specificity triggering both N-alpha-acetylation (NTA), with a preference for alanine, serine, threonine, methionine and to a lower extent valine as substrates (can also use glycine and leucine), and epsilon-lysine acetylation (KA) of several plastid proteins. Triggers lysine acetylation in KEA1 and KEA2. Acetylates in vitro histones H2A and H3. Does not act as a transcriptional activator but required for the dynamic reorganization of thylakoid protein complexes and grana during photosynthetic state transitions. Involved in melatonin biosynthesis by catalyzing the formation of N-acetylserotonin (NAS) from serotonin and of melatonin (N-acetyl-5-methoxytryptamine) from 5-methoxytryptamine (5-MT). By triggering melatonin biosynthesis, contributes to the chloroplast protein quality control (CPQC), which plays a pivotal role in starch synthesis, and confers melatonin-associated tolerance to high light (HL) stress. Prevents the accumulation of oil and anthocyanin content in mature seeds and avoids seed germination in a melatonin-dependent manner, but promotes mucilage production in the seed coat. Contributes to melatonin-mediated anthocyanin production in cold-exposed seedlings. Implicated in melatonin-monitored circadian dynamics of stomatal aperture to minimize night water loss and promote drought tolerance, partly by triggering hydrogen sulfide H(2)S-dependent stomotal closure in response to osmotic stress. In terms of biological role, (Microbial infection) Required for begomovirus infection and systemic spread. In case of begomoviruses infection, acetylates the capsid protein (CP), but not the nuclear shuttle protein (NSP). Stimulates melatonin-triggered defense responses to the necrotrophic Botrytis cinerea. The protein is GCN5-related N-acetyltransferase 2, chloroplastic of Arabidopsis thaliana (Mouse-ear cress).